Consider the following 326-residue polypeptide: GTPase IMAP family member 5 (326 aa).

Topologically, residues 1 to 297 (MEDHGFEELS…MLCRVTSCLD (297 aa)) are cytoplasmic. Residues 42-245 (SGLLRILLVG…HSNDLFVYTQ (204 aa)) form the AIG1-type G domain. Residues 51 to 59 (GKSGCGKSA), S72, 169 to 171 (HKE), and N206 each bind GTP. A helical; Anchor for type IV membrane protein membrane pass occupies residues 298 to 318 (WHIAVSVLLIVLGLTLLITLI). The Lumenal segment spans residues 319–326 (NMYIGRWK).

Belongs to the TRAFAC class TrmE-Era-EngA-EngB-Septin-like GTPase superfamily. AIG1/Toc34/Toc159-like paraseptin GTPase family. IAN subfamily. As to quaternary structure, interacts with BAD, BAK1, BAX, BCL2, BCL2L1/Bcl-xL and BCL2L11/BimEL. The interaction with BAX is increased, when cells initiate apoptosis upon IL2 withdrawal. Forms a complex with BCL2L1 or MCL1 and HSPA8/HSC70; the interaction between HSPA8 and BCL2L1 or MCL1 is impaired in the absence of GIMAP5. May interact (via N-terminus) with microtubules. As to expression, primarily expressed in spleen, heart, lung and intestine and, at lower levels, in kidney, stomach and muscle. Expressed in thymus and lymph nodes (at protein level). In the spleen, expressed in periarteriolar lymphatic sheets. Isoform 2: Expressed at higher levels in T lymphocytes compared to isoform 1.

The protein localises to the lysosome membrane. It localises to the endosome. Its subcellular location is the multivesicular body membrane. The protein resides in the endosome membrane. In terms of biological role, required for mitochondrial integrity and T-cell survival. May contribute to T-cell quiescence. Functionally, plays a role in T lymphocyte development and the optimal generation of CD4/CD8 double-positive thymocytes. Inhibitor of GSK3A, possibly by sequestering GSK3A in cytoplasmic vesicles and impairing its translocation to the nucleus. Consequently, impairs GSK3A-dependent transcriptional program and regulation of the DNA damage response occurring during T cells proliferation. Required for the survival of peripheral T cells, natural killer (NK) and NK T-cell development and the maintenance of normal liver function. Promotes the survival of quiescent T-cells. May regulate Ca(2+) homeostasis by modulating lysosomal Ca(2+) stores, preventing its accumulation in the absence of T cell activation. May play a role in mitochondrial DNA segregation in hematopoietic tissues. Is a regulator of liver endothelial cell homeostasis. In Rattus norvegicus (Rat), this protein is GTPase IMAP family member 5 (Gimap5).